Reading from the N-terminus, the 349-residue chain is GTPase Obg (349 aa).

The 159-residue stretch at 1–159 (MKFLDQAKVY…LWIWLRLKLI (159 aa)) folds into the Obg domain. The OBG-type G domain maps to 160–327 (ADAGLIGLPN…VLRALMRVVQ (168 aa)). Residues 166–173 (GLPNAGKS), 191–195 (FTTLH), 212–215 (DIPG), 279–282 (SQID), and 308–310 (SSA) contribute to the GTP site. Mg(2+) contacts are provided by S173 and T193.

This sequence belongs to the TRAFAC class OBG-HflX-like GTPase superfamily. OBG GTPase family. Monomer. It depends on Mg(2+) as a cofactor.

It localises to the cytoplasm. An essential GTPase which binds GTP, GDP and possibly (p)ppGpp with moderate affinity, with high nucleotide exchange rates and a fairly low GTP hydrolysis rate. Plays a role in control of the cell cycle, stress response, ribosome biogenesis and in those bacteria that undergo differentiation, in morphogenesis control. This Chelativorans sp. (strain BNC1) protein is GTPase Obg.